The sequence spans 310 residues: Small ribosomal subunit biogenesis GTPase RsgA 2 (310 aa).

In terms of domain architecture, CP-type G spans 77–238 (LSKQSHILAA…IIDTPGIKGF (162 aa)). GTP is bound by residues 126–129 (NKVD) and 180–188 (GHSGVGKST). 4 residues coordinate Zn(2+): Cys-262, Cys-267, His-269, and Cys-275.

It belongs to the TRAFAC class YlqF/YawG GTPase family. RsgA subfamily. As to quaternary structure, monomer. Associates with 30S ribosomal subunit, binds 16S rRNA. Zn(2+) serves as cofactor.

The protein localises to the cytoplasm. Its function is as follows. One of several proteins that assist in the late maturation steps of the functional core of the 30S ribosomal subunit. Helps release RbfA from mature subunits. May play a role in the assembly of ribosomal proteins into the subunit. Circularly permuted GTPase that catalyzes slow GTP hydrolysis, GTPase activity is stimulated by the 30S ribosomal subunit. The protein is Small ribosomal subunit biogenesis GTPase RsgA 2 of Bacteroides thetaiotaomicron (strain ATCC 29148 / DSM 2079 / JCM 5827 / CCUG 10774 / NCTC 10582 / VPI-5482 / E50).